We begin with the raw amino-acid sequence, 664 residues long: Peroxisomal acyl-coenzyme A oxidase 1 (664 aa).

Positions 135, 137, 138, 144, 177, 310, 330, 333, 401, and 422 each coordinate FAD. The active-site Proton acceptor is the E424. D426 is a binding site for FAD. Cysteines 467 and 576 form a disulfide. The Microbody targeting signal motif lies at 662–664 (ARL).

This sequence belongs to the acyl-CoA oxidase family. Homodimer. The cofactor is FAD. Expressed mainly in flowers and young seedlings. Lower expression in roots, leaves and bracts.

The protein resides in the peroxisome. The enzyme catalyses a 2,3-saturated acyl-CoA + O2 = a (2E)-enoyl-CoA + H2O2. Its function is as follows. Catalyzes the desaturation of both long- and medium-chain acyl-CoAs to 2-trans-enoyl-CoAs. Most active with C14-CoA. Activity on long-chain mono-unsaturated substrates is 40% higher than with the corresponding saturated substrates. Seems to be an important factor in the general metabolism of root tips. May be involved in the biosynthesis of jasmonic acid. In Arabidopsis thaliana (Mouse-ear cress), this protein is Peroxisomal acyl-coenzyme A oxidase 1.